A 302-amino-acid chain; its full sequence is Small ribosomal subunit biogenesis GTPase RsgA (302 aa).

Positions K75–M233 constitute a CP-type G domain. Residues N124 to D127 and G175 to S183 contribute to the GTP site. Zn(2+) contacts are provided by C257, C262, H264, and C270.

It belongs to the TRAFAC class YlqF/YawG GTPase family. RsgA subfamily. As to quaternary structure, monomer. Associates with 30S ribosomal subunit, binds 16S rRNA. The cofactor is Zn(2+).

It localises to the cytoplasm. Its function is as follows. One of several proteins that assist in the late maturation steps of the functional core of the 30S ribosomal subunit. Helps release RbfA from mature subunits. May play a role in the assembly of ribosomal proteins into the subunit. Circularly permuted GTPase that catalyzes slow GTP hydrolysis, GTPase activity is stimulated by the 30S ribosomal subunit. In Agathobacter rectalis (strain ATCC 33656 / DSM 3377 / JCM 17463 / KCTC 5835 / VPI 0990) (Eubacterium rectale), this protein is Small ribosomal subunit biogenesis GTPase RsgA.